A 239-amino-acid polypeptide reads, in one-letter code: Homeobox-leucine zipper protein HOX12 (239 aa).

Residues 22–65 form a disordered region; the sequence is PEAATSGGEQKKARQRRRRKVKPEAAAALAGESGGDEQAKKRRL. Residues 58 to 117 constitute a DNA-binding region (homeobox); that stretch reads EQAKKRRLSDEQARFLEMSFKKERKLETPRKVQLAAELGLDAKQVAVWFQNRRARHKSKL. Positions 107-168 form a coiled coil; sequence QNRRARHKSK…KLAAVAAATT (62 aa).

This sequence belongs to the HD-ZIP homeobox family. Class I subfamily. In terms of tissue distribution, expressed in seedlings, roots, stems, leaf sheaths and panicles.

It localises to the nucleus. Probable transcription factor. In Oryza sativa subsp. indica (Rice), this protein is Homeobox-leucine zipper protein HOX12 (HOX12).